The chain runs to 157 residues: uncharacterized protein (157 aa).

The first 30 residues, 1-30 (MLPEQGPQPSTMPLWCLLAACTSLPRQAAT), serve as a signal peptide directing secretion.

Its subcellular location is the secreted. This is an uncharacterized protein from Homo sapiens (Human).